Consider the following 348-residue polypeptide: Dihydroorotase (348 aa).

Residues H14 and H16 each coordinate Zn(2+). Substrate contacts are provided by residues 16–18 (HLR) and N42. The Zn(2+) site is built by K100, H137, and H175. Position 100 is an N6-carboxylysine (K100). H137 serves as a coordination point for substrate. Substrate is bound at residue L220. Position 248 (D248) interacts with Zn(2+). D248 is an active-site residue. Residues H252 and A264 each coordinate substrate.

This sequence belongs to the metallo-dependent hydrolases superfamily. DHOase family. Class II DHOase subfamily. As to quaternary structure, homodimer. It depends on Zn(2+) as a cofactor.

The catalysed reaction is (S)-dihydroorotate + H2O = N-carbamoyl-L-aspartate + H(+). It functions in the pathway pyrimidine metabolism; UMP biosynthesis via de novo pathway; (S)-dihydroorotate from bicarbonate: step 3/3. Functionally, catalyzes the reversible cyclization of carbamoyl aspartate to dihydroorotate. The chain is Dihydroorotase from Pseudomonas aeruginosa (strain ATCC 15692 / DSM 22644 / CIP 104116 / JCM 14847 / LMG 12228 / 1C / PRS 101 / PAO1).